The sequence spans 717 residues: ATP-dependent zinc metalloprotease FtsH (717 aa).

The Cytoplasmic segment spans residues 1-7 (MFKDKKM). A helical transmembrane segment spans residues 8–28 (LKYIVIYSIIAFGILLTFNMV). The Extracellular segment spans residues 29-109 (KDEMLYEKVD…VEFNVTKPEN (81 aa)). Residues 110 to 130 (YQLLGLLMSWVFPLILIFFVG) form a helical membrane-spanning segment. Residues 131 to 717 (RMMFSKMNNK…SSTNNKVDGE (587 aa)) lie on the Cytoplasmic side of the membrane. 206–213 (GPPGTGKT) contributes to the ATP binding site. His-427 lines the Zn(2+) pocket. Glu-428 is a catalytic residue. The Zn(2+) site is built by His-431 and Asp-504. The segment at 670–717 (KLARANNEANNDALDSSKENEEVKSNVNDGATEEKKDDSSTNNKVDGE) is disordered. 2 stretches are compositionally biased toward basic and acidic residues: residues 684 to 693 (DSSKENEEVK) and 701 to 717 (TEEK…VDGE).

This sequence in the central section; belongs to the AAA ATPase family. It in the C-terminal section; belongs to the peptidase M41 family. Homohexamer. Zn(2+) serves as cofactor.

The protein localises to the cell membrane. In terms of biological role, acts as a processive, ATP-dependent zinc metallopeptidase for both cytoplasmic and membrane proteins. Plays a role in the quality control of integral membrane proteins. The polypeptide is ATP-dependent zinc metalloprotease FtsH (Clostridium perfringens (strain ATCC 13124 / DSM 756 / JCM 1290 / NCIMB 6125 / NCTC 8237 / Type A)).